Reading from the N-terminus, the 542-residue chain is Malolactic enzyme (542 aa).

The active-site Proton donor is the Tyr-92. Residue Lys-165 is the Proton acceptor of the active site. Lys-165 contributes to the substrate binding site. Mn(2+) is bound by residues Glu-236, Asp-237, and Asp-260. NAD(+) contacts are provided by residues 293–296 (AGTA), Asn-405, and Asn-450. Asn-450 contacts substrate.

The protein belongs to the malic enzymes family. In terms of assembly, homodimer. It depends on Mn(2+) as a cofactor. NAD(+) serves as cofactor.

The catalysed reaction is (S)-malate + H(+) = (S)-lactate + CO2. With respect to regulation, oxamate, fructose-1,6-diphosphate and L-lactate act as non-competitive inhibitors, whereas succinate, citrate and tartrate isomers produce a competitive inhibition. Involved in the malolactic fermentation (MLF) of wine, which results in a natural decrease in acidity and favorable changes in wine flavors. Catalyzes the decarboxylation of L-malate to L-lactate. The protein is Malolactic enzyme (mleS) of Leuconostoc mesenteroides.